Reading from the N-terminus, the 157-residue chain is Cytochrome c-type biogenesis protein CcmE (157 aa).

Topologically, residues 1-8 are cytoplasmic; it reads MHPVRKQR. The chain crosses the membrane as a helical; Signal-anchor for type II membrane protein span at residues 9–29; it reads LMTVLFIVIASSVAVGLMVFA. The Periplasmic segment spans residues 30-157; the sequence is LSKNLNLFYP…KTCEGLDYAS (128 aa). Heme-binding residues include H124 and Y128.

This sequence belongs to the CcmE/CycJ family.

It is found in the cell inner membrane. In terms of biological role, heme chaperone required for the biogenesis of c-type cytochromes. Transiently binds heme delivered by CcmC and transfers the heme to apo-cytochromes in a process facilitated by CcmF and CcmH. In Saccharophagus degradans (strain 2-40 / ATCC 43961 / DSM 17024), this protein is Cytochrome c-type biogenesis protein CcmE.